The following is a 363-amino-acid chain: Neutral protease 2 homolog MEP7 (363 aa).

Residues 1-19 (MLLCSMVAALAALATPAFS) form the signal peptide. Residues 20–181 (CALPHLDLPE…ARAIQPLDRR (162 aa)) constitute a propeptide that is removed on maturation. 2 disulfides stabilise this stretch: C187-C259 and C266-C284. H308 contributes to the Zn(2+) binding site. The active site involves E309. Zn(2+)-binding residues include H312 and D323.

The protein belongs to the peptidase M35 family. The cofactor is Zn(2+).

Its subcellular location is the secreted. The catalysed reaction is Preferential cleavage of bonds with hydrophobic residues in P1'. Also 3-Asn-|-Gln-4 and 8-Gly-|-Ser-9 bonds in insulin B chain.. Its function is as follows. Secreted metalloproteinase that allows assimilation of proteinaceous substrates. Shows high activities on basic nuclear substrates such as histone and protamine. May be involved in virulence. The protein is Neutral protease 2 homolog MEP7 (MEP7) of Coccidioides posadasii (strain C735) (Valley fever fungus).